The primary structure comprises 134 residues: Terepressin/terephysin (134 aa).

The first 33 residues, 1–33 (MKCSVLQMSRLSWTACVLLLPLLLLTLQGGVQG), serve as a signal peptide directing secretion. Cysteines 34 and 39 form a disulfide. A propeptide spanning residues 44–50 (KRAVDSV) is cleaved from the precursor. 7 disulfide bridges follow: Cys56–Cys100, Cys59–Cys73, Cys67–Cys90, Cys74–Cys80, Cys107–Cys121, Cys115–Cys133, and Cys122–Cys127.

This sequence belongs to the vasopressin/oxytocin family. Contains 7 disulfide bonds. As to expression, expressed by the venom duct.

Its subcellular location is the secreted. The chain is Terepressin/terephysin from Terebra anilis (Auger snail).